A 273-amino-acid chain; its full sequence is Undecaprenyl-diphosphatase (273 aa).

Helical transmembrane passes span 6 to 26, 45 to 65, 90 to 110, 116 to 136, 190 to 210, 222 to 242, and 252 to 272; these read SLLV…LPVS, AKTF…VMFW, LTLI…LLFH, LFNP…LIAA, YAAS…ATAL, GDIP…LVAI, and ISFI…YVVF.

The protein belongs to the UppP family.

The protein resides in the cell inner membrane. The enzyme catalyses di-trans,octa-cis-undecaprenyl diphosphate + H2O = di-trans,octa-cis-undecaprenyl phosphate + phosphate + H(+). Its function is as follows. Catalyzes the dephosphorylation of undecaprenyl diphosphate (UPP). Confers resistance to bacitracin. This chain is Undecaprenyl-diphosphatase, found in Escherichia fergusonii (strain ATCC 35469 / DSM 13698 / CCUG 18766 / IAM 14443 / JCM 21226 / LMG 7866 / NBRC 102419 / NCTC 12128 / CDC 0568-73).